The primary structure comprises 276 residues: Formamidopyrimidine-DNA glycosylase (276 aa).

P2 functions as the Schiff-base intermediate with DNA in the catalytic mechanism. The Proton donor role is filled by E3. The active-site Proton donor; for beta-elimination activity is the K58. DNA contacts are provided by H92, R111, and K154. The FPG-type zinc finger occupies 239-273 (QVYGHVGEECPRCGNIFEKIKVSGRGTTFCPHCQV). R263 functions as the Proton donor; for delta-elimination activity in the catalytic mechanism.

Belongs to the FPG family. Monomer. Requires Zn(2+) as cofactor.

The catalysed reaction is Hydrolysis of DNA containing ring-opened 7-methylguanine residues, releasing 2,6-diamino-4-hydroxy-5-(N-methyl)formamidopyrimidine.. It carries out the reaction 2'-deoxyribonucleotide-(2'-deoxyribose 5'-phosphate)-2'-deoxyribonucleotide-DNA = a 3'-end 2'-deoxyribonucleotide-(2,3-dehydro-2,3-deoxyribose 5'-phosphate)-DNA + a 5'-end 5'-phospho-2'-deoxyribonucleoside-DNA + H(+). Functionally, involved in base excision repair of DNA damaged by oxidation or by mutagenic agents. Acts as a DNA glycosylase that recognizes and removes damaged bases. Has a preference for oxidized purines, such as 7,8-dihydro-8-oxoguanine (8-oxoG). Has AP (apurinic/apyrimidinic) lyase activity and introduces nicks in the DNA strand. Cleaves the DNA backbone by beta-delta elimination to generate a single-strand break at the site of the removed base with both 3'- and 5'-phosphates. The polypeptide is Formamidopyrimidine-DNA glycosylase (Lactobacillus acidophilus (strain ATCC 700396 / NCK56 / N2 / NCFM)).